The primary structure comprises 229 residues: Peptidase E (229 aa).

Catalysis depends on charge relay system residues Ser120, Asp135, and His157.

This sequence belongs to the peptidase S51 family.

Its subcellular location is the cytoplasm. The enzyme catalyses Dipeptidase E catalyzes the hydrolysis of dipeptides Asp-|-Xaa. It does not act on peptides with N-terminal Glu, Asn or Gln, nor does it cleave isoaspartyl peptides.. Functionally, hydrolyzes dipeptides containing N-terminal aspartate residues. May play a role in allowing the cell to use peptide aspartate to spare carbon otherwise required for the synthesis of the aspartate family of amino acids. The sequence is that of Peptidase E (pepE) from Salmonella typhimurium (strain LT2 / SGSC1412 / ATCC 700720).